We begin with the raw amino-acid sequence, 257 residues long: MTAKIQKILSDLGYGSRRFIECMIKCGKISINGEKAIIGQYLNKKNPGEILIDKKKIIVKRNKNLPKVLIYNKPIGEVCTRDDFQKRLTVFDKLPKLNLNRWVSVGRLDINTKGLLLFTNDGTLANKLMHPRSQIEREYNIRIFGEMNKNKINILRKGVKIIHGYVSFKEIVPLYDKKEGKNKWFKGILCEGKNREIRLMFKSIQCQVNQLIRVRYGNIILPKNLKEGQWMMLNSIFLKKLYNLINFDKEIINKKKN.

Residues 3-63 (AKIQKILSDL…KKKIIVKRNK (61 aa)) enclose the S4 RNA-binding domain. The active-site Nucleophile is the Asp-109.

The protein belongs to the pseudouridine synthase RsuA family.

The enzyme catalyses uridine(2605) in 23S rRNA = pseudouridine(2605) in 23S rRNA. Functionally, responsible for synthesis of pseudouridine from uracil-2605 in 23S ribosomal RNA. The chain is Ribosomal large subunit pseudouridine synthase B (rluB) from Buchnera aphidicola subsp. Schizaphis graminum (strain Sg).